The following is a 185-amino-acid chain: Threonylcarbamoyl-AMP synthase (185 aa).

A YrdC-like domain is found at 7-185 (AAQRRAARAH…IDFASGRVLR (179 aa)).

This sequence belongs to the SUA5 family. TsaC subfamily.

The protein localises to the cytoplasm. The catalysed reaction is L-threonine + hydrogencarbonate + ATP = L-threonylcarbamoyladenylate + diphosphate + H2O. Required for the formation of a threonylcarbamoyl group on adenosine at position 37 (t(6)A37) in tRNAs that read codons beginning with adenine. Catalyzes the conversion of L-threonine, HCO(3)(-)/CO(2) and ATP to give threonylcarbamoyl-AMP (TC-AMP) as the acyladenylate intermediate, with the release of diphosphate. In Laribacter hongkongensis (strain HLHK9), this protein is Threonylcarbamoyl-AMP synthase.